Here is a 520-residue protein sequence, read N- to C-terminus: GMP synthase [glutamine-hydrolyzing] (520 aa).

The region spanning 8–202 (RLLIIDFGSQ…FVRLAGFSGD (195 aa)) is the Glutamine amidotransferase type-1 domain. Cys-86 acts as the Nucleophile in catalysis. Active-site residues include His-177 and Glu-179. A GMPS ATP-PPase domain is found at 203 to 395 (WTMGAYREQM…LGLPDSFIGR (193 aa)). ATP is bound at residue 230–236 (SGGVDSS).

In terms of assembly, homodimer.

The enzyme catalyses XMP + L-glutamine + ATP + H2O = GMP + L-glutamate + AMP + diphosphate + 2 H(+). The protein operates within purine metabolism; GMP biosynthesis; GMP from XMP (L-Gln route): step 1/1. Catalyzes the synthesis of GMP from XMP. The sequence is that of GMP synthase [glutamine-hydrolyzing] from Ruegeria sp. (strain TM1040) (Silicibacter sp.).